Here is a 357-residue protein sequence, read N- to C-terminus: 3-isopropylmalate dehydrogenase (357 aa).

Arginine 97, arginine 107, arginine 135, and aspartate 224 together coordinate substrate. Mg(2+) is bound by residues aspartate 224, aspartate 248, and aspartate 252. 282–294 (GSAPDIAGQDKAN) is an NAD(+) binding site.

This sequence belongs to the isocitrate and isopropylmalate dehydrogenases family. LeuB type 1 subfamily. Homodimer. Mg(2+) serves as cofactor. The cofactor is Mn(2+).

The protein resides in the cytoplasm. The catalysed reaction is (2R,3S)-3-isopropylmalate + NAD(+) = 4-methyl-2-oxopentanoate + CO2 + NADH. Its pathway is amino-acid biosynthesis; L-leucine biosynthesis; L-leucine from 3-methyl-2-oxobutanoate: step 3/4. Its function is as follows. Catalyzes the oxidation of 3-carboxy-2-hydroxy-4-methylpentanoate (3-isopropylmalate) to 3-carboxy-4-methyl-2-oxopentanoate. The product decarboxylates to 4-methyl-2 oxopentanoate. In Parasynechococcus marenigrum (strain WH8102), this protein is 3-isopropylmalate dehydrogenase.